Consider the following 154-residue polypeptide: uncharacterized protein (154 aa).

GTP is bound at residue 12–19 (GSSDVGKT). Positions 17–112 (GKTTLMENLI…KIPYGIFINK (96 aa)) constitute a G domain.

The protein to M.thermoautotrophicum MTH765.

This is an uncharacterized protein from Methanocaldococcus jannaschii (strain ATCC 43067 / DSM 2661 / JAL-1 / JCM 10045 / NBRC 100440) (Methanococcus jannaschii).